The sequence spans 209 residues: Ribosomal RNA large subunit methyltransferase E (209 aa).

S-adenosyl-L-methionine contacts are provided by Gly63, Trp65, Asp83, Asp99, and Asp124. Lys164 functions as the Proton acceptor in the catalytic mechanism.

Belongs to the class I-like SAM-binding methyltransferase superfamily. RNA methyltransferase RlmE family.

It is found in the cytoplasm. The catalysed reaction is uridine(2552) in 23S rRNA + S-adenosyl-L-methionine = 2'-O-methyluridine(2552) in 23S rRNA + S-adenosyl-L-homocysteine + H(+). In terms of biological role, specifically methylates the uridine in position 2552 of 23S rRNA at the 2'-O position of the ribose in the fully assembled 50S ribosomal subunit. The chain is Ribosomal RNA large subunit methyltransferase E from Shewanella denitrificans (strain OS217 / ATCC BAA-1090 / DSM 15013).